We begin with the raw amino-acid sequence, 466 residues long: 3-isopropylmalate dehydratase large subunit (466 aa).

3 residues coordinate [4Fe-4S] cluster: Cys349, Cys410, and Cys413.

The protein belongs to the aconitase/IPM isomerase family. LeuC type 1 subfamily. In terms of assembly, heterodimer of LeuC and LeuD. Requires [4Fe-4S] cluster as cofactor.

It catalyses the reaction (2R,3S)-3-isopropylmalate = (2S)-2-isopropylmalate. It functions in the pathway amino-acid biosynthesis; L-leucine biosynthesis; L-leucine from 3-methyl-2-oxobutanoate: step 2/4. Its function is as follows. Catalyzes the isomerization between 2-isopropylmalate and 3-isopropylmalate, via the formation of 2-isopropylmaleate. The polypeptide is 3-isopropylmalate dehydratase large subunit (Ruthia magnifica subsp. Calyptogena magnifica).